Consider the following 976-residue polypeptide: LRR receptor-like serine/threonine-protein kinase ERECTA (976 aa).

The first 24 residues, 1-24 (MALFRDIVLLGFLFCLSLVATVTS), serve as a signal peptide directing secretion. The Extracellular segment spans residues 25-580 (EEGATLLEIK…RRTVRVSISR (556 aa)). 2 N-linked (GlcNAc...) asparagine glycosylation sites follow: N65 and N74. LRR repeat units follow at residues 69-92 (NVVALNLSDLNLDGEISPAIGDLK), 93-115 (SLLSIDLRGNRLSGQIPDEIGDC), 117-140 (SLQNLDLSFNELSGDIPFSISKLK), 141-163 (QLEQLILKNNQLIGPIPSTLSQI), 165-187 (NLKILDLAQNKLSGEIPRLIYWN), 189-212 (VLQYLGLRGNNLVGNISPDLCQLT), 213-235 (GLWYFDVRNNSLTGSIPETIGNC), 237-259 (AFQVLDLSYNQLTGEIPFDIGFL), 260-282 (QVATLSLQGNQLSGKIPSVIGLM), 284-306 (ALAVLDLSGNLLSGSIPPILGNL), 308-330 (FTEKLYLHSNKLTGSIPPELGNM), 332-355 (KLHYLELNDNHLTGHIPPELGKLT), 356-379 (DLFDLNVANNDLEGPIPDHLSSCT), 380-401 (NLNSLNVHGNKFSGTIPRAFQK), 404-425 (SMTYLNLSSNNIKGPIPVELSR), 428-449 (NLDTLDLSNNKINGIIPSSLGD), 452-473 (HLLKMNLSRNHITGVVPGDFGN), 476-498 (SIMEIDLSNNDISGPIPEELNQL), 500-522 (NIILLRLENNNLTGNVGSLANCL), and 523-545 (SLTVLNVSHNNLVGDIPKNNNFS). Residues N221 and N234 are each glycosylated (N-linked (GlcNAc...) asparagine). Residues N305 and N329 are each glycosylated (N-linked (GlcNAc...) asparagine). N409 carries N-linked (GlcNAc...) asparagine glycosylation. A glycan (N-linked (GlcNAc...) asparagine) is linked at N457. N510, N528, and N543 each carry an N-linked (GlcNAc...) asparagine glycan. A helical membrane pass occupies residues 581–601 (AAILGIAIGGLVILLMVLIAA). Residues 602–976 (CRPHNPPPFL…FGQVISQNSE (375 aa)) are Cytoplasmic-facing. Position 645 is a phosphothreonine (T645). Residues 648–918 (LSEKYIIGHG…QVTRVLGSFM (271 aa)) enclose the Protein kinase domain. ATP contacts are provided by residues 654-662 (IGHGASSTV) and K676. 2 positions are modified to phosphotyrosine: Y721 and Y760. Catalysis depends on D773, which acts as the Proton acceptor. The residue at position 815 (Y815) is a Phosphotyrosine. T823 carries the post-translational modification Phosphothreonine.

Belongs to the protein kinase superfamily. Ser/Thr protein kinase family. Homodimer and heterodimer with ERL1 and TMM. Interacts with EPF1, EPF2, EPFL4, EPFL5 and EPFL6. Interacts with SERK1, SERK2, SERK3/BAK1 and SERK4 in a EPF2-induced manner. Interacts with EPFL9/STOMAGEN. Mostly expressed in shoot apical meristems (SAM), organ primordia, flowers, siliques and young rosette leaves, and, to a lower extent, in stems and cauline leaves. Expressed in growing inflorescence stems and pedicels. Detected in epidermis, phloem and xylem.

It localises to the cell membrane. It catalyses the reaction L-seryl-[protein] + ATP = O-phospho-L-seryl-[protein] + ADP + H(+). The enzyme catalyses L-threonyl-[protein] + ATP = O-phospho-L-threonyl-[protein] + ADP + H(+). In terms of biological role, receptor kinase that, together with ERL1 and ERL2, regulates aerial architecture, including inflorescence (e.g. shoot apical meristem-originating organ shape, elongation of the internode and pedicels, and adaxial-abaxial polarity), and stomatal patterning (e.g. density and clustering), probably by tuning cell division and expansion. Redundantly involved with ERL1 in procambial development regulation. Forms a functional ligand-receptor pair with EPF2 (AC Q8LC53). Modulates plant transpiration efficiency by controlling stomatal density, leaf photosynthetic capacity, epidermal cell expansion, mesophyll cell proliferation and cell-cell contact. A phloem-specific expression of ER is sufficient for proper inflorescence architecture. Probable major trait regulating canalization (maintenance of phenotype despite varying environment) in many aspect of the plant physiology (e.g. plant morphology, light-dependent leaves number, branch number, flowering time, phytate and mineral concentrations) by transducing microenvironmental variation into phenotypic differentiation (ecological amplifier). May maintain development integrity in heat stress conditions. Regulates cell wall composition and structure. Confers resistance to the pathogenic bacteria Ralstonia solanacearum and to the necrotrophic fungi Plectosphaerella cucumerina and Pythium irregulare, and required for callose deposition upon infection. Resistance to P.cucumerina seems cell wall-mediated. Forms a constitutive complex with TMM involved in the recognition of the stomatal regulatory peptides EPF1, EPF2 and EPFL9/STOMAGEN. The protein is LRR receptor-like serine/threonine-protein kinase ERECTA of Arabidopsis thaliana (Mouse-ear cress).